The chain runs to 328 residues: Gonadotropin-releasing hormone receptor (328 aa).

Over 1 to 38 (MQDDTSSEQNPTHCSAINSSVPLVQGALPTLTLSGKIR) the chain is Extracellular. N-linked (GlcNAc...) asparagine glycosylation occurs at N18. A helical membrane pass occupies residues 39 to 59 (VTVTFFLFLVSTTLNASFLLK). The Cytoplasmic portion of the chain corresponds to 60–84 (LQKWTQKKEKGKKLSRMKVLLKHLT). Residues 85–105 (LANLLETLIVMPLDGMWNITV) traverse the membrane as a helical segment. Residues 106–115 (QWYAGELLCK) lie on the Extracellular side of the membrane. C114 and C196 are joined by a disulfide. Residues 116–136 (ILSYLKLFSMYAPAFMMVVIS) traverse the membrane as a helical segment. Residues 137-160 (LDRSMAITRPLPVQSNRKLEQSMT) are Cytoplasmic-facing. A helical membrane pass occupies residues 161-181 (GLAWGLSSVLAGPQLYIFKMI). Residues 182–208 (HLENGPGQTEVFSQCVTHCSFPQWWHQ) are Extracellular-facing. A helical transmembrane segment spans residues 209 to 229 (AFYNFFTFICLFIIPLLIMLI). Residues 230 to 271 (CNAKIIFTLTQVLQQDSNKLQLNQSKNNIPRARLRTLKMTVA) lie on the Cytoplasmic side of the membrane. A helical membrane pass occupies residues 272-292 (FAASFIVCWTPYYVLGLWYWF). Residues 293–306 (DPGMLHRMSEPVNH) lie on the Extracellular side of the membrane. Residues 307–327 (FFFLFAFLNPCFDPLIYGYFS) traverse the membrane as a helical segment. Position 328 (L328) is a topological domain, cytoplasmic.

This sequence belongs to the G-protein coupled receptor 1 family.

It is found in the cell membrane. Receptor for gonadotropin releasing hormone (GnRH) that mediates the action of GnRH to stimulate the secretion of the gonadotropic hormones luteinizing hormone (LH) and follicle-stimulating hormone (FSH). This receptor mediates its action by association with G-proteins that activate a phosphatidylinositol-calcium second messenger system. This is Gonadotropin-releasing hormone receptor (GNRHR) from Cavia porcellus (Guinea pig).